The primary structure comprises 383 residues: Dual-specificity RNA methyltransferase RlmN (383 aa).

Glu-95 functions as the Proton acceptor in the catalytic mechanism. Residues 101–349 (EETRGTLCVS…TTVRKTRGDD (249 aa)) form the Radical SAM core domain. Cys-108 and Cys-354 are joined by a disulfide. [4Fe-4S] cluster contacts are provided by Cys-115, Cys-119, and Cys-122. S-adenosyl-L-methionine contacts are provided by residues 180 to 181 (GE), Ser-212, 234 to 236 (SLH), and Asn-311. Cys-354 serves as the catalytic S-methylcysteine intermediate.

The protein belongs to the radical SAM superfamily. RlmN family. [4Fe-4S] cluster serves as cofactor.

It localises to the cytoplasm. It carries out the reaction adenosine(2503) in 23S rRNA + 2 reduced [2Fe-2S]-[ferredoxin] + 2 S-adenosyl-L-methionine = 2-methyladenosine(2503) in 23S rRNA + 5'-deoxyadenosine + L-methionine + 2 oxidized [2Fe-2S]-[ferredoxin] + S-adenosyl-L-homocysteine. The enzyme catalyses adenosine(37) in tRNA + 2 reduced [2Fe-2S]-[ferredoxin] + 2 S-adenosyl-L-methionine = 2-methyladenosine(37) in tRNA + 5'-deoxyadenosine + L-methionine + 2 oxidized [2Fe-2S]-[ferredoxin] + S-adenosyl-L-homocysteine. Functionally, specifically methylates position 2 of adenine 2503 in 23S rRNA and position 2 of adenine 37 in tRNAs. m2A2503 modification seems to play a crucial role in the proofreading step occurring at the peptidyl transferase center and thus would serve to optimize ribosomal fidelity. The sequence is that of Dual-specificity RNA methyltransferase RlmN from Paraburkholderia xenovorans (strain LB400).